The sequence spans 669 residues: DNA ligase (669 aa).

Residues 34-38 (DAEYD), 83-84 (SL), and glutamate 113 contribute to the NAD(+) site. The active-site N6-AMP-lysine intermediate is the lysine 115. Residues arginine 136, glutamate 170, lysine 286, and lysine 310 each contribute to the NAD(+) site. Cysteine 404, cysteine 407, cysteine 422, and cysteine 427 together coordinate Zn(2+). The 79-residue stretch at 591–669 (IADSPFAGKT…EEALVKAISH (79 aa)) folds into the BRCT domain.

It belongs to the NAD-dependent DNA ligase family. LigA subfamily. Mg(2+) serves as cofactor. Requires Mn(2+) as cofactor.

It carries out the reaction NAD(+) + (deoxyribonucleotide)n-3'-hydroxyl + 5'-phospho-(deoxyribonucleotide)m = (deoxyribonucleotide)n+m + AMP + beta-nicotinamide D-nucleotide.. DNA ligase that catalyzes the formation of phosphodiester linkages between 5'-phosphoryl and 3'-hydroxyl groups in double-stranded DNA using NAD as a coenzyme and as the energy source for the reaction. It is essential for DNA replication and repair of damaged DNA. The protein is DNA ligase of Halalkalibacterium halodurans (strain ATCC BAA-125 / DSM 18197 / FERM 7344 / JCM 9153 / C-125) (Bacillus halodurans).